The primary structure comprises 684 residues: Threonine--tRNA ligase (684 aa).

The TGS domain maps to 1–66 (MSTAASPAPA…DADVEVVPVP (66 aa)). A catalytic region spans residues 261–567 (DHRKLGVELD…LTEHYAGAFP (307 aa)). Positions 366, 417, and 544 each coordinate Zn(2+).

Belongs to the class-II aminoacyl-tRNA synthetase family. As to quaternary structure, homodimer. Zn(2+) is required as a cofactor.

The protein localises to the cytoplasm. The enzyme catalyses tRNA(Thr) + L-threonine + ATP = L-threonyl-tRNA(Thr) + AMP + diphosphate + H(+). Catalyzes the attachment of threonine to tRNA(Thr) in a two-step reaction: L-threonine is first activated by ATP to form Thr-AMP and then transferred to the acceptor end of tRNA(Thr). Also edits incorrectly charged L-seryl-tRNA(Thr). This chain is Threonine--tRNA ligase, found in Mycobacterium sp. (strain KMS).